An 831-amino-acid polypeptide reads, in one-letter code: Phenylalanine--tRNA ligase beta subunit (831 aa).

The tRNA-binding domain occupies 44-155 (GPVDGPVTVG…GAAEPGADGA (112 aa)). The region spanning 414-489 (WSPPPIRMGV…RLEGLEVIPS (76 aa)) is the B5 domain. Mg(2+) contacts are provided by Asp467, Asp473, Glu476, and Glu477. An FDX-ACB domain is found at 737–830 (SPYPAVFQDV…AAERVGAVLR (94 aa)).

The protein belongs to the phenylalanyl-tRNA synthetase beta subunit family. Type 1 subfamily. As to quaternary structure, tetramer of two alpha and two beta subunits. It depends on Mg(2+) as a cofactor.

It localises to the cytoplasm. It catalyses the reaction tRNA(Phe) + L-phenylalanine + ATP = L-phenylalanyl-tRNA(Phe) + AMP + diphosphate + H(+). The chain is Phenylalanine--tRNA ligase beta subunit (pheT) from Mycobacterium tuberculosis (strain ATCC 25618 / H37Rv).